The following is a 38-amino-acid chain: Large ribosomal subunit protein bL36 (38 aa).

The protein belongs to the bacterial ribosomal protein bL36 family.

In Prosthecochloris aestuarii (strain DSM 271 / SK 413), this protein is Large ribosomal subunit protein bL36.